Consider the following 213-residue polypeptide: Penicillin-binding protein activator LpoB (213 aa).

An N-terminal signal peptide occupies residues 1–19 (MTKMSRYALITALAMFLAG). The N-palmitoyl cysteine moiety is linked to residue Cys-20. Cys-20 is lipidated: S-diacylglycerol cysteine. Residues 28–74 (PVEEVKPAPEQPAEPQQPVPTVPSVPTIPQQPGPIEHEDQTAPPAPH) are disordered. Positions 36–50 (PEQPAEPQQPVPTVP) are enriched in pro residues.

It belongs to the LpoB family. As to quaternary structure, interacts with PBP1b.

The protein localises to the cell outer membrane. Functionally, regulator of peptidoglycan synthesis that is essential for the function of penicillin-binding protein 1B (PBP1b). The sequence is that of Penicillin-binding protein activator LpoB from Escherichia coli O157:H7.